Consider the following 115-residue polypeptide: Large ribosomal subunit protein bL20c (115 aa).

This sequence belongs to the bacterial ribosomal protein bL20 family.

It is found in the plastid. Its subcellular location is the chloroplast. In terms of biological role, binds directly to 23S ribosomal RNA and is necessary for the in vitro assembly process of the 50S ribosomal subunit. It is not involved in the protein synthesizing functions of that subunit. In Chlorokybus atmophyticus (Soil alga), this protein is Large ribosomal subunit protein bL20c.